The sequence spans 618 residues: Proline--tRNA ligase (618 aa).

Belongs to the class-II aminoacyl-tRNA synthetase family. ProS type 1 subfamily. In terms of assembly, homodimer.

Its subcellular location is the cytoplasm. It catalyses the reaction tRNA(Pro) + L-proline + ATP = L-prolyl-tRNA(Pro) + AMP + diphosphate. In terms of biological role, catalyzes the attachment of proline to tRNA(Pro) in a two-step reaction: proline is first activated by ATP to form Pro-AMP and then transferred to the acceptor end of tRNA(Pro). As ProRS can inadvertently accommodate and process non-cognate amino acids such as alanine and cysteine, to avoid such errors it has two additional distinct editing activities against alanine. One activity is designated as 'pretransfer' editing and involves the tRNA(Pro)-independent hydrolysis of activated Ala-AMP. The other activity is designated 'posttransfer' editing and involves deacylation of mischarged Ala-tRNA(Pro). The misacylated Cys-tRNA(Pro) is not edited by ProRS. The sequence is that of Proline--tRNA ligase from Streptococcus pyogenes serotype M12 (strain MGAS2096).